A 259-amino-acid chain; its full sequence is MPATTGPQDVSGRAGGPASTERLHVAIIMDGNGRWAKQRGMPRVLGHRAGVNALKRTVEGAQSQNVGVLTVFGFSTENWSRPPQEVSELMGLLKAYVESDLERLAKAGVRVRIIGRRTGLSPDIAEVIERAERRTAQNSEFVLQVAFNYGGQADITDAARAFAERVERGEAKASDLNEKTFEQFLSTASAPPPDLIVRTSGERRISNFLLWDCAYAELVFQDVLWPDYGPEALAAAIAEYRGRDRRYGGVAADDVAVAG.

The active site involves aspartate 30. Aspartate 30 lines the Mg(2+) pocket. Residues 31–34 (GNGR), tryptophan 35, arginine 43, histidine 47, and 75–77 (STE) each bind substrate. Asparagine 78 (proton acceptor) is an active-site residue. Residues tryptophan 79, arginine 81, arginine 198, and 204-206 (RIS) each bind substrate. A Mg(2+)-binding site is contributed by glutamate 217.

It belongs to the UPP synthase family. Homodimer. Mg(2+) is required as a cofactor.

In terms of biological role, catalyzes the condensation of isopentenyl diphosphate (IPP) with allylic pyrophosphates generating different type of terpenoids. In Caulobacter vibrioides (strain ATCC 19089 / CIP 103742 / CB 15) (Caulobacter crescentus), this protein is Isoprenyl transferase.